The primary structure comprises 148 residues: Cytochrome c6, chloroplastic (148 aa).

The transit peptide at 1–58 (MLQLANRSVRAKAARASQSARSVSCAAAKRGADVAPLTSALAVTASILLTTGAASASA) directs the protein to the chloroplast. Positions 72, 75, 76, and 118 each coordinate heme c.

The protein belongs to the cytochrome c family. PetJ subfamily. In terms of assembly, thought to function as a monomer, however 2 crystal forms are observed; a homodimer and homotrimer, suggesting the protein oligomerizes. Binds 1 heme c group covalently per subunit.

It is found in the plastid. The protein localises to the chloroplast thylakoid lumen. Functionally, functions as an electron carrier between membrane-bound cytochrome b6-f and photosystem I in oxygenic photosynthesis. The chain is Cytochrome c6, chloroplastic (petJ) from Chlamydomonas reinhardtii (Chlamydomonas smithii).